We begin with the raw amino-acid sequence, 366 residues long: Carbamoyl phosphate synthase small chain (366 aa).

A CPSase region spans residues 1–171; the sequence is MLERRYLVLE…KTPYVSTGSD (171 aa). The L-glutamine site is built by serine 47, glycine 221, and glycine 223. Residues 173–360 enclose the Glutamine amidotransferase type-1 domain; it reads SVVLLDFGKK…MTMMKEFKEK (188 aa). Cysteine 248 acts as the Nucleophile in catalysis. Positions 249, 252, 290, 292, and 293 each coordinate L-glutamine. Catalysis depends on residues histidine 333 and glutamate 335.

Belongs to the CarA family. Composed of two chains; the small (or glutamine) chain promotes the hydrolysis of glutamine to ammonia, which is used by the large (or ammonia) chain to synthesize carbamoyl phosphate. Tetramer of heterodimers (alpha,beta)4.

The catalysed reaction is hydrogencarbonate + L-glutamine + 2 ATP + H2O = carbamoyl phosphate + L-glutamate + 2 ADP + phosphate + 2 H(+). It carries out the reaction L-glutamine + H2O = L-glutamate + NH4(+). It participates in amino-acid biosynthesis; L-arginine biosynthesis; carbamoyl phosphate from bicarbonate: step 1/1. The protein operates within pyrimidine metabolism; UMP biosynthesis via de novo pathway; (S)-dihydroorotate from bicarbonate: step 1/3. Functionally, small subunit of the glutamine-dependent carbamoyl phosphate synthetase (CPSase). CPSase catalyzes the formation of carbamoyl phosphate from the ammonia moiety of glutamine, carbonate, and phosphate donated by ATP, constituting the first step of 2 biosynthetic pathways, one leading to arginine and/or urea and the other to pyrimidine nucleotides. The small subunit (glutamine amidotransferase) binds and cleaves glutamine to supply the large subunit with the substrate ammonia. In Staphylococcus haemolyticus (strain JCSC1435), this protein is Carbamoyl phosphate synthase small chain.